We begin with the raw amino-acid sequence, 186 residues long: Lipid A palmitoyltransferase PagP (186 aa).

The signal sequence occupies residues 1-25 (MNVSKYVAIFSFVFIQLISVGKVFA). Residues His58, Asp101, and Ser102 contribute to the active site.

The protein belongs to the lipid A palmitoyltransferase family. As to quaternary structure, homodimer.

The protein resides in the cell outer membrane. It catalyses the reaction lipid A (E. coli) + a 1-hexadecanoyl-2-acyl-sn-glycero-3-phosphocholine = hepta-acyl lipid A (E. coli) + a 2-acyl-sn-glycero-3-phosphocholine. The catalysed reaction is lipid IIA + a 1-hexadecanoyl-2-acyl-sn-glycero-3-phosphocholine = lipid IIB + a 2-acyl-sn-glycero-3-phosphocholine. The enzyme catalyses lipid IVA (E. coli) + a 1-hexadecanoyl-2-acyl-sn-glycero-3-phosphocholine = lipid IVB (E. coli) + a 2-acyl-sn-glycero-3-phosphocholine. With respect to regulation, inhibited by lauryldimethylamine oxide (LDAO) and dodecylphosphocholine (DPC). Functionally, transfers a palmitate residue from the sn-1 position of a phospholipid to the N-linked hydroxymyristate on the proximal unit of lipid A or its precursors. Phosphatidylglycerol (PtdGro), phosphatidylethanolamine (PtdEtn), phosphatidylserine (PtdSer) and phosphatidic acid (Ptd-OH) are all effective acyl donors. The chain is Lipid A palmitoyltransferase PagP from Escherichia coli (strain K12).